A 99-amino-acid polypeptide reads, in one-letter code: Nucleoid-associated protein LL0120 (99 aa).

It belongs to the YbaB/EbfC family. In terms of assembly, homodimer.

It localises to the cytoplasm. Its subcellular location is the nucleoid. Functionally, binds to DNA and alters its conformation. May be involved in regulation of gene expression, nucleoid organization and DNA protection. The protein is Nucleoid-associated protein LL0120 (ybcG) of Lactococcus lactis subsp. lactis (strain IL1403) (Streptococcus lactis).